Consider the following 298-residue polypeptide: Mimecan (298 aa).

The N-terminal stretch at 1 to 20 (MKTLQSTLLLLLLVPLIKPA) is a signal peptide. The O-linked (GalNAc...) threonine glycan is linked to T80. N-linked (GlcNAc...) (keratan sulfate) asparagine glycosylation occurs at N88. LRR repeat units lie at residues 112 to 131 (DAVP…FNKI), 132 to 155 (KKLT…GNLI), 156 to 179 (EDIE…ENQL), 180 to 199 (LKLP…YNKI), 200 to 225 (KSRG…HNAL), 226 to 246 (ESVP…FNNI), and 247 to 277 (ASIT…GNPI). The N-linked (GlcNAc...) (keratan sulfate) asparagine glycan is linked to N214. The cysteines at positions 255 and 288 are disulfide-linked. Residue N258 is glycosylated (N-linked (GlcNAc...) (keratan sulfate) asparagine).

It belongs to the small leucine-rich proteoglycan (SLRP) family. SLRP class III subfamily. O-glycosylated with a core 1 or possibly core 8 glycan. In terms of processing, contains keratan sulfate. Bone.

It localises to the secreted. It is found in the extracellular space. The protein localises to the extracellular matrix. Induces bone formation in conjunction with TGF-beta-1 or TGF-beta-2. This Homo sapiens (Human) protein is Mimecan (OGN).